Reading from the N-terminus, the 199-residue chain is Lipid A acyltransferase PagP (199 aa).

An N-terminal signal peptide occupies residues 1 to 25 (MNYKDIINACILSGVFLLHSPSALA). Residues His-74, Asp-117, and Ser-118 contribute to the active site.

This sequence belongs to the lipid A palmitoyltransferase family. Homodimer.

It localises to the cell outer membrane. It catalyses the reaction a lipid A + a 1,2-diacyl-sn-glycero-3-phosphocholine = a hepta-acyl lipid A + a 2-acyl-sn-glycero-3-phosphocholine. The catalysed reaction is a lipid IVA + a 1,2-diacyl-sn-glycero-3-phosphocholine = a lipid IVB + a 2-acyl-sn-glycero-3-phosphocholine. The enzyme catalyses a lipid IIA + a 1,2-diacyl-sn-glycero-3-phosphocholine = a lipid IIB + a 2-acyl-sn-glycero-3-phosphocholine. In terms of biological role, transfers a fatty acid residue from the sn-1 position of a phospholipid to the N-linked hydroxyfatty acid chain on the proximal unit of lipid A or its precursors. The protein is Lipid A acyltransferase PagP of Yersinia pestis bv. Antiqua (strain Antiqua).